A 729-amino-acid polypeptide reads, in one-letter code: Fatty acid oxidation complex subunit alpha (729 aa).

An enoyl-CoA hydratase/isomerase region spans residues Met1–Lys189. Asp296 contacts substrate. Positions Glu311–Ala729 are 3-hydroxyacyl-CoA dehydrogenase. Residues Met324, Asp343, Val400 to Glu402, Lys407, and Ser429 contribute to the NAD(+) site. Catalysis depends on His450, which acts as the For 3-hydroxyacyl-CoA dehydrogenase activity. Asn453 is an NAD(+) binding site. Asn500 and Tyr660 together coordinate substrate. The tract at residues Thr707–Ala729 is disordered.

It in the N-terminal section; belongs to the enoyl-CoA hydratase/isomerase family. The protein in the C-terminal section; belongs to the 3-hydroxyacyl-CoA dehydrogenase family. Heterotetramer of two alpha chains (FadB) and two beta chains (FadA).

The catalysed reaction is a (3S)-3-hydroxyacyl-CoA + NAD(+) = a 3-oxoacyl-CoA + NADH + H(+). It carries out the reaction a (3S)-3-hydroxyacyl-CoA = a (2E)-enoyl-CoA + H2O. The enzyme catalyses a 4-saturated-(3S)-3-hydroxyacyl-CoA = a (3E)-enoyl-CoA + H2O. It catalyses the reaction (3S)-3-hydroxybutanoyl-CoA = (3R)-3-hydroxybutanoyl-CoA. The catalysed reaction is a (3Z)-enoyl-CoA = a 4-saturated (2E)-enoyl-CoA. It carries out the reaction a (3E)-enoyl-CoA = a 4-saturated (2E)-enoyl-CoA. It functions in the pathway lipid metabolism; fatty acid beta-oxidation. Functionally, involved in the aerobic and anaerobic degradation of long-chain fatty acids via beta-oxidation cycle. Catalyzes the formation of 3-oxoacyl-CoA from enoyl-CoA via L-3-hydroxyacyl-CoA. It can also use D-3-hydroxyacyl-CoA and cis-3-enoyl-CoA as substrate. The chain is Fatty acid oxidation complex subunit alpha from Salmonella typhi.